The primary structure comprises 429 residues: Ribosomal RNA small subunit methyltransferase B (429 aa).

S-adenosyl-L-methionine contacts are provided by residues 254–260 (CAGPGGK), aspartate 277, aspartate 303, and aspartate 322. Cysteine 375 acts as the Nucleophile in catalysis.

This sequence belongs to the class I-like SAM-binding methyltransferase superfamily. RsmB/NOP family.

It is found in the cytoplasm. The enzyme catalyses cytidine(967) in 16S rRNA + S-adenosyl-L-methionine = 5-methylcytidine(967) in 16S rRNA + S-adenosyl-L-homocysteine + H(+). Specifically methylates the cytosine at position 967 (m5C967) of 16S rRNA. This Escherichia coli O6:K15:H31 (strain 536 / UPEC) protein is Ribosomal RNA small subunit methyltransferase B.